The following is a 1068-amino-acid chain: Putative protein TIC 214 N-terminal part (1068 aa).

6 consecutive transmembrane segments (helical) span residues 11–31 (VLWVPILSWINFSSTFFLFGI), 68–88 (ITGQLLIFLSIFYSPLYVLLI), 92–112 (LLTLLVLPYILFYWYKIKDLI), 131–151 (IFFDSFIFQLFNPVVLPSPVL), 166–186 (FIFLLSSFLGWCFGQFLFVSL), and 213–233 (FSIIILSFSLLHLSRAPVPFI).

This sequence belongs to the TIC214 family. Part of the Tic complex.

It is found in the plastid. It localises to the chloroplast inner membrane. Functionally, involved in protein precursor import into chloroplasts. May be part of an intermediate translocation complex acting as a protein-conducting channel at the inner envelope. In Marchantia polymorpha (Common liverwort), this protein is Putative protein TIC 214 N-terminal part.